The primary structure comprises 412 residues: UPF0761 membrane protein LPC_2650 (412 aa).

A run of 6 helical transmembrane segments spans residues 36 to 56 (ALAF…LAIF), 99 to 119 (LSIW…FTIE), 137 to 157 (AFLL…LSLA), 177 to 197 (ILHY…YVVV), 210 to 230 (GGLV…YYLI), and 241 to 261 (AFAT…ITLL).

This sequence belongs to the UPF0761 family.

It is found in the cell inner membrane. The protein is UPF0761 membrane protein LPC_2650 of Legionella pneumophila (strain Corby).